The chain runs to 249 residues: 2,3-bisphosphoglycerate-dependent phosphoglycerate mutase (249 aa).

Residues 8–15 (RHGESQWN), 21–22 (TG), Arg-60, 87–90 (ERHY), Lys-98, 114–115 (RR), and 183–184 (GN) each bind substrate. Residue His-9 is the Tele-phosphohistidine intermediate of the active site. Catalysis depends on Glu-87, which acts as the Proton donor/acceptor.

It belongs to the phosphoglycerate mutase family. BPG-dependent PGAM subfamily.

It carries out the reaction (2R)-2-phosphoglycerate = (2R)-3-phosphoglycerate. It functions in the pathway carbohydrate degradation; glycolysis; pyruvate from D-glyceraldehyde 3-phosphate: step 3/5. Catalyzes the interconversion of 2-phosphoglycerate and 3-phosphoglycerate. This is 2,3-bisphosphoglycerate-dependent phosphoglycerate mutase from Pelodictyon phaeoclathratiforme (strain DSM 5477 / BU-1).